The sequence spans 351 residues: Protein RecA (351 aa).

Residue 64–71 (GPESSGKT) participates in ATP binding. The segment at 330–351 (DRFLQNGGPDPDDGDGDATAEM) is disordered. Over residues 339–351 (DPDDGDGDATAEM) the composition is skewed to acidic residues.

Belongs to the RecA family.

The protein localises to the cytoplasm. In terms of biological role, can catalyze the hydrolysis of ATP in the presence of single-stranded DNA, the ATP-dependent uptake of single-stranded DNA by duplex DNA, and the ATP-dependent hybridization of homologous single-stranded DNAs. It interacts with LexA causing its activation and leading to its autocatalytic cleavage. The protein is Protein RecA of Rhizobium leguminosarum bv. viciae.